The chain runs to 85 residues: Large ribosomal subunit protein bL27 (85 aa).

Residues 1–20 are disordered; it reads MATKKAGGSTRNGRDSEAKR.

It belongs to the bacterial ribosomal protein bL27 family.

This chain is Large ribosomal subunit protein bL27, found in Actinobacillus succinogenes (strain ATCC 55618 / DSM 22257 / CCUG 43843 / 130Z).